A 169-amino-acid chain; its full sequence is Glycine-rich RNA-binding protein 10 (169 aa).

Positions 6–84 (YRCFVGGLAW…RTITVNEAQS (79 aa)) constitute an RRM domain. Disordered regions lie at residues 80-101 (NEAQ…YGGR) and 121-169 (GYGS…GGGW). The span at 85–101 (RGGGGGGGRGGGGYGGR) shows a compositional bias: gly residues.

Expressed only in roots and stems.

Its function is as follows. Possibly has a role in RNA transcription or processing during stress. The protein is Glycine-rich RNA-binding protein 10 (GRP10) of Brassica napus (Rape).